The chain runs to 268 residues: Protein DEEPER ROOTING 1 (268 aa).

The segment covering 11-21 has biased composition (low complexity); it reads LNGKQGNKKPN. The interval 11-39 is disordered; it reads LNGKQGNKKPNTVPITTHPAKQEPREEFS. Basic and acidic residues predominate over residues 30–39; it reads AKQEPREEFS. The IGT motif signature appears at 44 to 50; it reads GLLAIGT. The segment at 220–246 is disordered; that stretch reads SRAASMKKYLEDRQIPTKKESNTEDDT. Residues 227–246 are compositionally biased toward basic and acidic residues; it reads KYLEDRQIPTKKESNTEDDT.

This sequence belongs to the LAZY family. As to expression, expressed in roots.

Functionally, involved in the development of the root system architecture by influencing lateral root angles and primary root length. This chain is Protein DEEPER ROOTING 1, found in Prunus persica (Peach).